The primary structure comprises 193 residues: Ion-translocating oxidoreductase complex subunit A (193 aa).

6 consecutive transmembrane segments (helical) span residues 4–24 (LALI…KFLG), 38–58 (AMGM…CSYL), 65–85 (APLG…AVVV), 102–122 (VLGI…VALL), 134–154 (AVYG…FAAL), and 171–191 (SVAL…AGLV).

Belongs to the NqrDE/RnfAE family. As to quaternary structure, the complex is composed of six subunits: RnfA, RnfB, RnfC, RnfD, RnfE and RnfG.

It is found in the cell inner membrane. Its function is as follows. Part of a membrane-bound complex that couples electron transfer with translocation of ions across the membrane. This chain is Ion-translocating oxidoreductase complex subunit A, found in Alkalilimnicola ehrlichii (strain ATCC BAA-1101 / DSM 17681 / MLHE-1).